The following is a 93-amino-acid chain: Phosphoribosyl-ATP pyrophosphatase (93 aa).

It belongs to the PRA-PH family.

It is found in the cytoplasm. It carries out the reaction 1-(5-phospho-beta-D-ribosyl)-ATP + H2O = 1-(5-phospho-beta-D-ribosyl)-5'-AMP + diphosphate + H(+). It participates in amino-acid biosynthesis; L-histidine biosynthesis; L-histidine from 5-phospho-alpha-D-ribose 1-diphosphate: step 2/9. This Mycobacterium avium (strain 104) protein is Phosphoribosyl-ATP pyrophosphatase.